The following is a 260-amino-acid chain: 3'-5' ssDNA/RNA exonuclease TatD (260 aa).

Residues glutamate 92, histidine 128, and histidine 153 each coordinate a divalent metal cation.

It belongs to the metallo-dependent hydrolases superfamily. TatD-type hydrolase family. TatD subfamily. In terms of assembly, monomer. Mg(2+) is required as a cofactor.

The protein resides in the cytoplasm. 3'-5' exonuclease that prefers single-stranded DNA and RNA. May play a role in the H(2)O(2)-induced DNA damage repair. In Pantoea ananatis (strain LMG 20103), this protein is 3'-5' ssDNA/RNA exonuclease TatD.